A 318-amino-acid polypeptide reads, in one-letter code: NADH-ubiquinone oxidoreductase chain 1 (318 aa).

The next 8 membrane-spanning stretches (helical) occupy residues 2-22 (FTINLLLLITPALIAMAFLTL), 70-90 (LYMAAPTLALTIALLLWTPLP), 98-118 (FNLGLLFVLATSSLAVYSILW), 140-160 (ISYGVTLAIILLSTLLMSGSF), 173-193 (WLLLPSWPLTMMWFISTLAET), 217-237 (AGSFALFFMAEYMNIIMMNAL), 253-273 (ELYTMNFMTKTLLLTILFLWI), and 294-314 (LPLTLALCMWYISMPMLLSGI).

It belongs to the complex I subunit 1 family.

It localises to the mitochondrion inner membrane. The catalysed reaction is a ubiquinone + NADH + 5 H(+)(in) = a ubiquinol + NAD(+) + 4 H(+)(out). In terms of biological role, core subunit of the mitochondrial membrane respiratory chain NADH dehydrogenase (Complex I) that is believed to belong to the minimal assembly required for catalysis. Complex I functions in the transfer of electrons from NADH to the respiratory chain. The immediate electron acceptor for the enzyme is believed to be ubiquinone. This is NADH-ubiquinone oxidoreductase chain 1 (MT-ND1) from Sapajus apella (Brown-capped capuchin).